Here is a 415-residue protein sequence, read N- to C-terminus: Gamma-glutamyl phosphate reductase (415 aa).

This sequence belongs to the gamma-glutamyl phosphate reductase family.

It localises to the cytoplasm. The catalysed reaction is L-glutamate 5-semialdehyde + phosphate + NADP(+) = L-glutamyl 5-phosphate + NADPH + H(+). It participates in amino-acid biosynthesis; L-proline biosynthesis; L-glutamate 5-semialdehyde from L-glutamate: step 2/2. Its function is as follows. Catalyzes the NADPH-dependent reduction of L-glutamate 5-phosphate into L-glutamate 5-semialdehyde and phosphate. The product spontaneously undergoes cyclization to form 1-pyrroline-5-carboxylate. This is Gamma-glutamyl phosphate reductase from Shouchella clausii (strain KSM-K16) (Alkalihalobacillus clausii).